We begin with the raw amino-acid sequence, 140 residues long: Pro-vaccinia growth factor (140 aa).

Residues 1–18 form the signal peptide; the sequence is MLINYLMLLFAAMIIRSF. Residues 19 to 100 are Extracellular-facing; sequence ADSGNAIETT…SEKPNTTTSY (82 aa). N-linked (GlcNAc...) asparagine; by host glycosylation occurs at Asn-34. The EGF-like domain occupies 41-81; sequence AIRLCGPEGDGYCLHGDCIHARDIDGMYCRCSHGYTGIRCQ. 3 disulfide bridges follow: Cys-45–Cys-58, Cys-53–Cys-69, and Cys-71–Cys-80. N-linked (GlcNAc...) asparagine; by host glycosylation occurs at Asn-95. Residues 101 to 121 traverse the membrane as a helical segment; sequence IPSPGIMLVLVGIIIITCCLL. At 122 to 140 the chain is on the cytoplasmic side; sequence SVYRFTRRTKLPLQDMVVP.

The protein belongs to the orthopoxvirus OPG019 family. In terms of assembly, vaccinia growth factor interacts with host EGFR and promotes EGFR dimerization.

The protein localises to the host membrane. It localises to the secreted. Its function is as follows. Stimulates cellular proliferation (hyperplasia)and mobility around infected cells to promote rapid and efficient spread of infection. This effect is beneficial for virus replication in vivo, because poxviruses replicate possibly better in proliferating cells than in quiescent cells. Acts by binding host EGFR, inducing its dimerization, autophosphorylation and leading to activation of several cellular pathways regulating cell proliferation or cell survival. The activation by host EGFR of mitogen activated protein kinases (MAPK) and extracellular-signal regulated kinases (ERK) are essential for the positive effect of vaccinia growth factor on poxvirus virulence in vivo. In Homo sapiens (Human), this protein is Pro-vaccinia growth factor (OPG019).